Consider the following 675-residue polypeptide: Gastrula zinc finger protein xFG20-1 (675 aa).

C2H2-type zinc fingers lie at residues 62–84, 90–112, 118–140, 146–168, 174–196, 202–224, 257–279, 286–308, 344–366, and 373–395; these read FTCT…IRAH, FSCM…YSVH, FSCT…LRVH, YSCE…QRTH, FSCT…LKTH, HLCA…QKIH, FPCT…QSTH, and LPCT…QSTH. A disordered region spans residues 302-325; the sequence is RTHQSTHTEGQKSLPSTESGGTFS. The segment covering 304–325 has biased composition (polar residues); sequence HQSTHTEGQKSLPSTESGGTFS. Polar residues predominate over residues 390–407; that stretch reads THQSTHTSPSTEFGVQTT. The interval 390-423 is disordered; that stretch reads THQSTHTSPSTEFGVQTTEDNHQSPSKDHTGEKP. Over residues 408 to 421 the composition is skewed to basic and acidic residues; the sequence is EDNHQSPSKDHTGE. 8 consecutive C2H2-type zinc fingers follow at residues 424-446, 452-474, 480-501, 507-529, 535-557, 563-585, 591-613, and 619-642; these read FSCS…LVVH, YHCI…QRTH, FSCN…YRVH, YPCT…YKVH, YPCQ…LRTH, FSCT…LTTH, FSCT…YKMH, and FTCT…TTVH.

The protein belongs to the krueppel C2H2-type zinc-finger protein family.

The protein resides in the nucleus. Functionally, may be involved in transcriptional regulation. The protein is Gastrula zinc finger protein xFG20-1 of Xenopus laevis (African clawed frog).